Consider the following 32-residue polypeptide: DNA-binding protein HU (32 aa).

This sequence belongs to the bacterial histone-like protein family.

Functionally, histone-like DNA-binding protein which is capable of wrapping DNA to stabilize it, and thus to prevent its denaturation under extreme environmental conditions. The chain is DNA-binding protein HU (hup) from Synechocystis sp. (strain PCC 6701).